We begin with the raw amino-acid sequence, 256 residues long: 1-(5-phosphoribosyl)-5-[(5-phosphoribosylamino)methylideneamino] imidazole-4-carboxamide isomerase (256 aa).

Residue Asp-8 is the Proton acceptor of the active site. The active-site Proton donor is Asp-129.

Belongs to the HisA/HisF family.

Its subcellular location is the cytoplasm. The catalysed reaction is 1-(5-phospho-beta-D-ribosyl)-5-[(5-phospho-beta-D-ribosylamino)methylideneamino]imidazole-4-carboxamide = 5-[(5-phospho-1-deoxy-D-ribulos-1-ylimino)methylamino]-1-(5-phospho-beta-D-ribosyl)imidazole-4-carboxamide. It participates in amino-acid biosynthesis; L-histidine biosynthesis; L-histidine from 5-phospho-alpha-D-ribose 1-diphosphate: step 4/9. This Prochlorococcus marinus (strain NATL1A) protein is 1-(5-phosphoribosyl)-5-[(5-phosphoribosylamino)methylideneamino] imidazole-4-carboxamide isomerase.